We begin with the raw amino-acid sequence, 101 residues long: Gamma-secretase subunit PEN-2 (101 aa).

At 1–17 (MNLERVSNEEKLNLCRK) the chain is on the cytoplasmic side. Positions 18-36 (YYLGGFAFLPFLWLVNIFW) form an intramembrane region, helical. The Cytoplasmic segment spans residues 37-57 (FFREAFLAPAYTEQSQIKGYV). A helical membrane pass occupies residues 58–78 (WRSAVGFLFWVIILATWITIF). Residues 79-101 (QIYRPRWGALGDYLSFTIPLGTP) are Lumenal-facing.

The protein belongs to the PEN-2 family. As to quaternary structure, the functional gamma-secretase complex is composed of at least four polypeptides: a presenilin homodimer (PSEN1 or PSEN2), nicastrin (NCSTN), APH1 (APH1A or APH1B) and PSENEN.

Its subcellular location is the endoplasmic reticulum membrane. The protein resides in the golgi apparatus. The protein localises to the golgi stack membrane. It localises to the cell membrane. It is found in the membrane. In terms of biological role, essential subunit of the gamma-secretase complex, an endoprotease complex that catalyzes the intramembrane cleavage of integral membrane proteins such as Notch receptors and APP (amyloid-beta precursor protein). The gamma-secretase complex plays a role in Notch and Wnt signaling cascades and regulation of downstream processes via its role in processing key regulatory proteins, and by regulating cytosolic CTNNB1 levels. PSENEN modulates both endoproteolysis of presenilin and gamma-secretase activity. The protein is Gamma-secretase subunit PEN-2 (Psenen) of Mus musculus (Mouse).